A 325-amino-acid polypeptide reads, in one-letter code: Acetyl-coenzyme A carboxylase carboxyl transferase subunit alpha (325 aa).

The region spanning 35–292 (EIEKLEARLA…DKVLKRSLKQ (258 aa)) is the CoA carboxyltransferase C-terminal domain.

It belongs to the AccA family. As to quaternary structure, acetyl-CoA carboxylase is a heterohexamer composed of biotin carboxyl carrier protein (AccB), biotin carboxylase (AccC) and two subunits each of ACCase subunit alpha (AccA) and ACCase subunit beta (AccD).

Its subcellular location is the cytoplasm. It carries out the reaction N(6)-carboxybiotinyl-L-lysyl-[protein] + acetyl-CoA = N(6)-biotinyl-L-lysyl-[protein] + malonyl-CoA. The protein operates within lipid metabolism; malonyl-CoA biosynthesis; malonyl-CoA from acetyl-CoA: step 1/1. Its function is as follows. Component of the acetyl coenzyme A carboxylase (ACC) complex. First, biotin carboxylase catalyzes the carboxylation of biotin on its carrier protein (BCCP) and then the CO(2) group is transferred by the carboxyltransferase to acetyl-CoA to form malonyl-CoA. This Geobacillus sp. (strain WCH70) protein is Acetyl-coenzyme A carboxylase carboxyl transferase subunit alpha.